Consider the following 655-residue polypeptide: 1-deoxy-D-xylulose-5-phosphate synthase (655 aa).

Residues H73 and 114-116 contribute to the thiamine diphosphate site; that span reads SHA. D145 serves as a coordination point for Mg(2+). Residues 146–147, N174, Y285, and E367 contribute to the thiamine diphosphate site; that span reads GA. A Mg(2+)-binding site is contributed by N174. The disordered stretch occupies residues 626 to 655; sequence RQPAIEDDPTSPGEAAPAGERAGEAIGDQR. Basic and acidic residues predominate over residues 646–655; sequence RAGEAIGDQR.

Belongs to the transketolase family. DXPS subfamily. Homodimer. Mg(2+) serves as cofactor. The cofactor is thiamine diphosphate.

It carries out the reaction D-glyceraldehyde 3-phosphate + pyruvate + H(+) = 1-deoxy-D-xylulose 5-phosphate + CO2. It functions in the pathway metabolic intermediate biosynthesis; 1-deoxy-D-xylulose 5-phosphate biosynthesis; 1-deoxy-D-xylulose 5-phosphate from D-glyceraldehyde 3-phosphate and pyruvate: step 1/1. Functionally, catalyzes the acyloin condensation reaction between C atoms 2 and 3 of pyruvate and glyceraldehyde 3-phosphate to yield 1-deoxy-D-xylulose-5-phosphate (DXP). This chain is 1-deoxy-D-xylulose-5-phosphate synthase, found in Frankia casuarinae (strain DSM 45818 / CECT 9043 / HFP020203 / CcI3).